Consider the following 76-residue polypeptide: DNA-directed RNA polymerase subunit epsilon (76 aa).

Belongs to the RNA polymerase subunit epsilon family. RNAP is composed of a core of 2 alpha, a beta and a beta' subunit. The core is associated with a delta subunit, and at least one of epsilon or omega. When a sigma factor is associated with the core the holoenzyme is formed, which can initiate transcription.

It carries out the reaction RNA(n) + a ribonucleoside 5'-triphosphate = RNA(n+1) + diphosphate. Its function is as follows. A non-essential component of RNA polymerase (RNAP). This chain is DNA-directed RNA polymerase subunit epsilon, found in Streptococcus sanguinis (strain SK36).